Here is a 360-residue protein sequence, read N- to C-terminus: Variable large protein 18 (360 aa).

The N-terminal stretch at 1-26 (MRKRISAIINKLNISIMMMIVVLMIG) is a signal peptide. C27 is lipidated: N-palmitoyl cysteine. A lipid anchor (S-diacylglycerol cysteine) is attached at C27.

The protein belongs to the variable large protein (Vlp) family. Alpha subfamily.

The protein localises to the cell outer membrane. Its function is as follows. The Vlp and Vsp proteins are antigenically distinct proteins, only one vlp or vsp gene is transcriptionally active at any one time. Switching between these genes is a mechanism of host immune response evasion. This Borrelia hermsii protein is Variable large protein 18.